Consider the following 313-residue polypeptide: Ribosomal protein L11 methyltransferase (313 aa).

S-adenosyl-L-methionine-binding residues include T151, G172, D194, and N245.

Belongs to the methyltransferase superfamily. PrmA family.

It is found in the cytoplasm. The catalysed reaction is L-lysyl-[protein] + 3 S-adenosyl-L-methionine = N(6),N(6),N(6)-trimethyl-L-lysyl-[protein] + 3 S-adenosyl-L-homocysteine + 3 H(+). Methylates ribosomal protein L11. The protein is Ribosomal protein L11 methyltransferase of Nitrosomonas europaea (strain ATCC 19718 / CIP 103999 / KCTC 2705 / NBRC 14298).